We begin with the raw amino-acid sequence, 218 residues long: Glutathione S-transferase class-mu 26 kDa isozyme (218 aa).

A GST N-terminal domain is found at 2–83 (SPILGYWKIK…YIADKHNMLG (82 aa)). Glutathione contacts are provided by residues 7–8 (YW), 41–45 (WRNKK), 54–55 (NL), and 67–68 (QS). In terms of domain architecture, GST C-terminal spans 85–203 (CPKERAEISM…KSSKYIAWPL (119 aa)). Tyr111 serves as a coordination point for substrate.

It belongs to the GST superfamily. Mu family. Homodimer.

The enzyme catalyses RX + glutathione = an S-substituted glutathione + a halide anion + H(+). Conjugation of reduced glutathione to a wide number of exogenous and endogenous hydrophobic electrophiles. In terms of biological role, GST isoenzymes appear to play a central role in the parasite detoxification system. Other functions are also suspected including a role in increasing the solubility of haematin in the parasite gut. The chain is Glutathione S-transferase class-mu 26 kDa isozyme from Schistosoma japonicum (Blood fluke).